Consider the following 1248-residue polypeptide: Structural polyprotein (1248 aa).

Over residues 1 to 10 the composition is skewed to polar residues; sequence MEFIPTQTFY. The disordered stretch occupies residues 1–104; that stretch reads MEFIPTQTFY…KKKKPGRRER (104 aa). The segment covering 22–44 has biased composition (low complexity); it reads RPTIQVIRPRPRPQRQAGQLAQL. A host transcription inhibition region spans residues 36–68; it reads RQAGQLAQLISAVNKLTMRAVPQQKPRRNRKNK. A compositionally biased stretch (basic residues) spans 60–72; sequence KPRRNRKNKKQKQ. A Nuclear localization signal motif is present at residues 61–99; it reads PRRNRKNKKQKQKQQAPQNNTNQKKQPPKKKPAQKKKKP. Low complexity predominate over residues 73–85; sequence KQQAPQNNTNQKK. A binding to the viral RNA region spans residues 84-114; it reads KKQPPKKKPAQKKKKPGRRERMCMKIENDCI. Positions 86-101 are enriched in basic residues; it reads QPPKKKPAQKKKKPGR. The segment at 99-113 is ribosome-binding; that stretch reads PGRRERMCMKIENDC. Cys113 and Cys128 form a disulfide bridge. One can recognise a Peptidase S3 domain in the interval 113–261; it reads CIFEVKHEGK…KITPEGAEEW (149 aa). His139 (charge relay system) is an active-site residue. A Nuclear export signal motif is present at residues 144–154; that stretch reads IDNADLAKLAF. Positions 155 to 160 are interaction with spike glycoprotein E2; sequence KRSSKY. The active-site Charge relay system is the Asp161. A dimerization of the capsid protein region spans residues 183-193; that stretch reads PEGYYNWHHGA. Ser213 (charge relay system) is an active-site residue. The dimerization of the capsid protein stretch occupies residues 219 to 223; the sequence is DNKGR. The tract at residues 262–274 is functions as an uncleaved signal peptide for the precursor of protein E3/E2; that stretch reads SLAIPVMCLLANT. Topologically, residues 262–692 are extracellular; the sequence is SLAIPVMCLL…YYYELYPTMT (431 aa). Intrachain disulfides connect Cys269/Cys278, Cys283/Cys287, Cys286/Cys318, Cys344/Cys450, Cys347/Cys353, Cys416/Cys430, Cys478/Cys591, Cys526/Cys550, and Cys528/Cys545. N-linked (GlcNAc...) asparagine; by host glycosylation is present at Asn273. Interaction with host Mxra8 receptor regions lie at residues 351–354 and 387–389; these read HSCH and HDW. 2 interaction with host Mxra8 receptor regions span residues 509 to 512 and 541 to 547; these read QSGN and VINNCKV. N-linked (GlcNAc...) asparagine; by host glycosylation is found at Asn588 and Asn670. A helical transmembrane segment spans residues 693 to 713; sequence VVVVSVASFILLSMVGMAVGM. Residues 714-748 lie on the Cytoplasmic side of the membrane; the sequence is CMCARRRCITPYELTPGATVPFLLSLICCIRTAKA. Residues 716–720 form an interaction with the capsid protein region; that stretch reads CARRR. 3 S-palmitoyl cysteine; by host lipidation sites follow: Cys721, Cys741, and Cys742. Residues 721-741 are transient transmembrane before p62-6K protein processing; it reads CITPYELTPGATVPFLLSLIC. Cysteines 721 and 742 form a disulfide. Residues 749-763 are Extracellular-facing; that stretch reads ATYQEAAVYLWNEQQ. The helical transmembrane segment at 764-784 threads the bilayer; the sequence is PLFWLQALIPLAALIVLCNCL. At 785–795 the chain is on the cytoplasmic side; it reads RLLPCCCKTLA. The helical transmembrane segment at 796-816 threads the bilayer; that stretch reads FLAVMSIGAHTVSAYEHVTVI. Residues 817 to 1224 lie on the Extracellular side of the membrane; sequence PNTVGVPYKT…AMSWVQKITG (408 aa). Intrachain disulfides connect Cys858-Cys923, Cys871-Cys903, Cys872-Cys905, and Cys877-Cys887. Residues 893–910 are E1 fusion peptide loop; it reads VYPFMWGGAYCFCDAENT. Asn950 and Asn1079 each carry an N-linked (GlcNAc...) asparagine; by host glycan. 4 disulfides stabilise this stretch: Cys1068–Cys1080, Cys1110–Cys1185, Cys1115–Cys1189, and Cys1137–Cys1179. Residues 1225-1245 form a helical membrane-spanning segment; sequence GVGLVVAVAALILIVVLCVSF. Residue Cys1242 is the site of S-palmitoyl cysteine; by host attachment. Cys1242 carries the S-stearoyl cysteine; by host lipid modification. Residues 1246-1248 are Cytoplasmic-facing; the sequence is SRH.

Belongs to the alphavirus structural polyprotein family. Homodimer. Homomultimer. Interacts with host karyopherin KPNA4; this interaction allows the nuclear import of the viral capsid protein. Interacts with spike glycoprotein E2. Interacts with host IRAK1; the interaction leads to inhibition of IRAK1-dependent signaling. As to quaternary structure, the precursor of protein E3/E2 and E1 form a heterodimer shortly after synthesis. In terms of assembly, interacts with spike glycoprotein E2. The precursor of protein E3/E2 and E1 form a heterodimer shortly after synthesis. Processing of the precursor of protein E3/E2 into E2 and E3 results in a heterodimer of the spike glycoproteins E2 and E1. Spike at virion surface are constituted of three E2-E1 heterodimers. After target cell attachment and endocytosis, E1 changes conformation to form homotrimers. Interacts with 6K protein. Interacts with host MXRA8; this interaction mediates virus entry. The interaction involves 2 adjacent E2-E1 heterodimers. Interacts with spike glycoprotein E1. Processing of the precursor of protein E3/E2 into E2 and E3 results in a heterodimer of the spike glycoproteins E2 and E1. Spike at virion surface are constituted of a trimer of E2-E1 heterodimers. Interacts with 6K protein. Interacts with host MXRA8; this interaction mediates virus entry. The interaction involves 2 adjacent E2-E1 heterodimers. As to quaternary structure, oligomer. Interacts with spike glycoprotein E1. Interacts with spike glycoprotein E2. In terms of processing, specific enzymatic cleavages in vivo yield mature proteins. Capsid protein is auto-cleaved during polyprotein translation, unmasking a signal peptide at the N-terminus of the precursor of E3/E2. The remaining polyprotein is then targeted to the host endoplasmic reticulum, where host signal peptidase cleaves it into pE2, 6K and E1 proteins. pE2 is further processed to mature E3 and E2 by host furin in trans-Golgi vesicle. Post-translationally, palmitoylated via thioester bonds. These palmitoylations may induce disruption of the C-terminus transmembrane. This would result in the reorientation of E2 C-terminus from lumenal to cytoplasmic side. N-glycosylated. In terms of processing, palmitoylated via thioester bonds.

It localises to the virion. The protein resides in the host cytoplasm. The protein localises to the host cell membrane. It is found in the host nucleus. Its subcellular location is the virion membrane. It localises to the host Golgi apparatus. The protein resides in the host trans-Golgi network. The protein localises to the host endoplasmic reticulum. The enzyme catalyses Autocatalytic release of the core protein from the N-terminus of the togavirus structural polyprotein by hydrolysis of a -Trp-|-Ser- bond.. Functionally, forms an icosahedral capsid with a T=4 symmetry composed of 240 copies of the capsid protein surrounded by a lipid membrane through which penetrate 80 spikes composed of trimers of E1-E2 heterodimers. The capsid protein binds to the viral RNA genome at a site adjacent to a ribosome binding site for viral genome translation following genome release. Possesses a protease activity that results in its autocatalytic cleavage from the nascent structural protein. Following its self-cleavage, the capsid protein transiently associates with ribosomes, and within several minutes the protein binds to viral RNA and rapidly assembles into icosahedric core particles. The resulting nucleocapsid eventually associates with the cytoplasmic domain of the spike glycoprotein E2 at the cell membrane, leading to budding and formation of mature virions. In case of infection, new virions attach to target cells and after clathrin-mediated endocytosis their membrane fuses with the host endosomal membrane. This leads to the release of the nucleocapsid into the cytoplasm, followed by an uncoating event necessary for the genomic RNA to become accessible. The uncoating might be triggered by the interaction of capsid proteins with ribosomes. Binding of ribosomes would release the genomic RNA since the same region is genomic RNA-binding and ribosome-binding. Specifically inhibits interleukin-1 receptor-associated kinase 1/IRAK1-dependent signaling during viral entry, representing a means by which the alphaviruses may evade innate immune detection and activation prior to viral gene expression. Degrades host cyclic GMP-AMP synthase (CGAS) thereby inhibiting the cGAS-STING pathway. In terms of biological role, provides the signal sequence for the translocation of the precursor of protein E3/E2 to the host endoplasmic reticulum. Furin-cleaved E3 remains associated with spike glycoprotein E1 and mediates pH protection of the latter during the transport via the secretory pathway. After virion release from the host cell, the assembly protein E3 is gradually released in the extracellular space. Its function is as follows. Plays a role in viral attachment to target host cell, by binding to the cell receptor MXRA8. Synthesized as a p62 precursor which is processed by furin at the cell membrane just before virion budding, giving rise to E2-E1 heterodimer. The p62-E1 heterodimer is stable, whereas E2-E1 is unstable and dissociate at low pH. p62 is processed at the last step, presumably to avoid E1 fusion activation before its final export to cell surface. E2 C-terminus contains a transitory transmembrane that would be disrupted by palmitoylation, resulting in reorientation of the C-terminal tail from lumenal to cytoplasmic side. This step is critical since E2 C-terminus is involved in budding by interacting with capsid proteins. This release of E2 C-terminus in cytoplasm occurs lately in protein export, and precludes premature assembly of particles at the endoplasmic reticulum membrane. Acts as a viroporin that participates in virus glycoprotein processing and transport to the plasma membrane, cell permeabilization and budding of viral particles. Disrupts the calcium homeostasis of the cell, probably at the endoplasmic reticulum level. This leads to cytoplasmic calcium elevation. Because of its lipophilic properties, the 6K protein is postulated to influence the selection of lipids that interact with the transmembrane domains of the glycoproteins, which, in turn, affects the deformability of the bilayer required for the extreme curvature that occurs as budding proceeds. Present in low amount in virions, about 3% compared to viral glycoproteins. Functionally, class II viral fusion protein. Fusion activity is inactive as long as E1 is bound to E2 in mature virion. After virus attachment to target cell and endocytosis, acidification of the endosome induce dissociation of E1/E2 heterodimer and concomitant trimerization of the E1 subunits. This E1 trimer is fusion active, and promotes release of viral nucleocapsid in cytoplasm after endosome and viral membrane fusion. Efficient fusion requires the presence of cholesterol and sphingolipid in the target membrane. This is Structural polyprotein from Chikungunya virus (strain S27-African prototype) (CHIKV).